A 208-amino-acid polypeptide reads, in one-letter code: Outer-membrane lipoprotein carrier protein (208 aa).

An N-terminal signal peptide occupies residues Met-1–Ala-22.

The protein belongs to the LolA family. In terms of assembly, monomer.

It localises to the periplasm. In terms of biological role, participates in the translocation of lipoproteins from the inner membrane to the outer membrane. Only forms a complex with a lipoprotein if the residue after the N-terminal Cys is not an aspartate (The Asp acts as a targeting signal to indicate that the lipoprotein should stay in the inner membrane). This chain is Outer-membrane lipoprotein carrier protein, found in Shewanella loihica (strain ATCC BAA-1088 / PV-4).